The following is a 187-amino-acid chain: ATP synthase subunit b 2 (187 aa).

The chain crosses the membrane as a helical span at residues 32-52; sequence TTFAAQILWLAIAFGLLYYLM.

Belongs to the ATPase B chain family. In terms of assembly, F-type ATPases have 2 components, F(1) - the catalytic core - and F(0) - the membrane proton channel. F(1) has five subunits: alpha(3), beta(3), gamma(1), delta(1), epsilon(1). F(0) has three main subunits: a(1), b(2) and c(10-14). The alpha and beta chains form an alternating ring which encloses part of the gamma chain. F(1) is attached to F(0) by a central stalk formed by the gamma and epsilon chains, while a peripheral stalk is formed by the delta and b chains.

It localises to the cell inner membrane. Functionally, f(1)F(0) ATP synthase produces ATP from ADP in the presence of a proton or sodium gradient. F-type ATPases consist of two structural domains, F(1) containing the extramembraneous catalytic core and F(0) containing the membrane proton channel, linked together by a central stalk and a peripheral stalk. During catalysis, ATP synthesis in the catalytic domain of F(1) is coupled via a rotary mechanism of the central stalk subunits to proton translocation. Component of the F(0) channel, it forms part of the peripheral stalk, linking F(1) to F(0). The b'-subunit is a diverged and duplicated form of b found in plants and photosynthetic bacteria. The polypeptide is ATP synthase subunit b 2 (atpF2) (Methylobacterium sp. (strain 4-46)).